The following is a 1135-amino-acid chain: Large proline-rich protein bag6-A (1135 aa).

The Ubiquitin-like domain occupies 7–82 (MEVTVKTLDS…HLVERAPPQT (76 aa)). Disordered regions lie at residues 76 to 114 (ERAP…RNGN), 194 to 238 (EQAA…SPSE), 350 to 407 (TGNG…PHPR), 498 to 522 (SFQF…VPGA), 552 to 612 (QGGS…QHLS), 661 to 698 (PVST…ESLP), 1075 to 1099 (KATG…EAQG), and 1116 to 1135 (NESY…RGDP). A compositionally biased stretch (low complexity) spans 79–100 (PPQTQPSTGGPSTSSSTSPTSS). A compositionally biased stretch (polar residues) spans 212–227 (RETLPQTTQNTDGQSN). Residues 228–237 (TTPTSHPSPS) show a composition bias toward low complexity. Positions 367–387 (QPPSTNTSEPQRPNTENQPPS) are enriched in polar residues. 2 stretches are compositionally biased toward low complexity: residues 555–600 (SSTS…SVPS) and 663–672 (STAPTQSASQ). The span at 673 to 692 (APPPSSPPPPPAHSSPPPAA) shows a compositional bias: pro residues. Positions 1087–1099 (CVRRELDNSEAQG) are enriched in basic and acidic residues. The span at 1116-1129 (NESYSAQRFPNTQR) shows a compositional bias: polar residues.

As to quaternary structure, component of the bag6/bat3 complex.

It localises to the cytoplasm. The protein resides in the cytosol. It is found in the nucleus. The protein localises to the secreted. Its subcellular location is the extracellular exosome. Its function is as follows. ATP-independent molecular chaperone preventing the aggregation of misfolded and hydrophobic patches-containing proteins. Functions as part of a cytosolic protein quality control complex, the bag6/bat3 complex, which maintains these client proteins in a soluble state and participates in their proper delivery to the endoplasmic reticulum or alternatively can promote their sorting to the proteasome where they undergo degradation. The bag6/bat3 complex is involved in the post-translational delivery of tail-anchored/type II transmembrane proteins to the endoplasmic reticulum membrane. Similarly, the bag6/bat3 complex also functions as a sorting platform for proteins of the secretory pathway that are mislocalized to the cytosol either delivering them to the proteasome for degradation or to the endoplasmic reticulum. The bag6/bat3 complex also plays a role in the endoplasmic reticulum-associated degradation (ERAD), a quality control mechanism that eliminates unwanted proteins of the endoplasmic reticulum through their retrotranslocation to the cytosol and their targeting to the proteasome. It maintains these retrotranslocated proteins in an unfolded yet soluble state condition in the cytosol to ensure their proper delivery to the proteasome. Also required for selective ubiquitin-mediated degradation of defective nascent chain polypeptides by the proteasome. Also involved in endoplasmic reticulum stress-induced pre-emptive quality control, a mechanism that selectively attenuates the translocation of newly synthesized proteins into the endoplasmic reticulum and reroutes them to the cytosol for proteasomal degradation. May ensure the proper degradation of these proteins and thereby protects the endoplasmic reticulum from protein overload upon stress. By stabilizing a large spectrum of proteins, may indirectly affect different biological processes including apoptosis. By controlling the steady-state expression of the IGF1R receptor, indirectly regulates the insulin-like growth factor receptor signaling pathway. When nuclear, may also act as a component of some chromatin regulator complex. The chain is Large proline-rich protein bag6-A from Xenopus laevis (African clawed frog).